The chain runs to 423 residues: GTPase HflX (423 aa).

The 163-residue stretch at 201–363 folds into the Hflx-type G domain; that stretch reads IQLALVGYTN…KIEQALKGMM (163 aa). Residues 207–214, 232–236, 254–257, 320–323, and 341–343 each bind GTP; these read GYTNAGKS, FATLD, DTVG, NKAD, and SAY. 2 residues coordinate Mg(2+): S214 and T234.

This sequence belongs to the TRAFAC class OBG-HflX-like GTPase superfamily. HflX GTPase family. In terms of assembly, monomer. Associates with the 50S ribosomal subunit. Mg(2+) serves as cofactor.

The protein localises to the cytoplasm. In terms of biological role, GTPase that associates with the 50S ribosomal subunit and may have a role during protein synthesis or ribosome biogenesis. In Alkalihalophilus pseudofirmus (strain ATCC BAA-2126 / JCM 17055 / OF4) (Bacillus pseudofirmus), this protein is GTPase HflX.